A 100-amino-acid polypeptide reads, in one-letter code: Urease subunit gamma (100 aa).

Belongs to the urease gamma subunit family. In terms of assembly, heterotrimer of UreA (gamma), UreB (beta) and UreC (alpha) subunits. Three heterotrimers associate to form the active enzyme.

The protein localises to the cytoplasm. The catalysed reaction is urea + 2 H2O + H(+) = hydrogencarbonate + 2 NH4(+). Its pathway is nitrogen metabolism; urea degradation; CO(2) and NH(3) from urea (urease route): step 1/1. The polypeptide is Urease subunit gamma (Rhizobium meliloti (strain 1021) (Ensifer meliloti)).